A 1334-amino-acid chain; its full sequence is SCAR-like protein 2 (1334 aa).

Residues 197–207 show a composition bias toward basic and acidic residues; sequence KTGNFQREKKS. Disordered stretches follow at residues 197 to 281, 294 to 331, 481 to 516, 568 to 602, 643 to 668, 791 to 832, 931 to 956, 1000 to 1026, 1248 to 1268, and 1280 to 1304; these read KTGN…SSFS, DTKP…GTSA, PDSS…ADAP, PNQS…SSYT, DKPT…TVES, STSH…KNII, FEKK…YSEK, FQLL…GRSY, SGQQ…DTKN, and RSKT…TANS. Positions 241 to 256 are enriched in polar residues; the sequence is VQLTSRHFATPSTDGR. Over residues 310–319 the composition is skewed to low complexity; sequence SNNNLHKLSN. The segment covering 320 to 330 has biased composition (polar residues); sequence TPLHTRLNGTS. The span at 574 to 595 shows a compositional bias: basic and acidic residues; that stretch reads DSKEIPDSKAEDAPIDSPEKLE. Residues 791–823 are compositionally biased toward polar residues; it reads STSHSSETNQSTVRTPDTVIGQTEGSTGCSTSF. Low complexity predominate over residues 945–956; that stretch reads SSLFSSSHYSEK. Positions 1248 to 1260 are enriched in basic and acidic residues; it reads SGQQKLNGHEKSK. Residues 1271-1289 form the WH2 domain; it reads EREELLQQIRSKTFNLRRT. Residues 1289 to 1304 show a composition bias toward low complexity; it reads TNASKTNTSSPTTANS.

It belongs to the SCAR/WAVE family.

It is found in the cytoplasm. The protein localises to the cytoskeleton. Functionally, involved in regulation of actin and microtubule organization. Part of a WAVE complex that activates the Arp2/3 complex. The protein is SCAR-like protein 2 of Oryza sativa subsp. japonica (Rice).